A 396-amino-acid polypeptide reads, in one-letter code: Orotidine 5'-phosphate decarboxylase (396 aa).

Substrate contacts are provided by residues Asp46, 68–70, 103–112, Tyr346, and Arg365; these read KTH and DRKFVDIGST. Lys105 serves as the catalytic Proton donor.

Belongs to the OMP decarboxylase family.

The enzyme catalyses orotidine 5'-phosphate + H(+) = UMP + CO2. The protein operates within pyrimidine metabolism; UMP biosynthesis via de novo pathway; UMP from orotate: step 2/2. This Sordaria macrospora (strain ATCC MYA-333 / DSM 997 / K(L3346) / K-hell) protein is Orotidine 5'-phosphate decarboxylase (URA3).